Here is a 437-residue protein sequence, read N- to C-terminus: Argininosuccinate lyase (437 aa).

Belongs to the lyase 1 family. Argininosuccinate lyase subfamily.

It is found in the cytoplasm. It carries out the reaction 2-(N(omega)-L-arginino)succinate = fumarate + L-arginine. The protein operates within amino-acid biosynthesis; L-arginine biosynthesis; L-arginine from L-ornithine and carbamoyl phosphate: step 3/3. This chain is Argininosuccinate lyase, found in Clostridium novyi (strain NT).